We begin with the raw amino-acid sequence, 259 residues long: Proteasome subunit alpha (259 aa).

Belongs to the peptidase T1A family. In terms of assembly, the 20S proteasome core is composed of 14 alpha and 14 beta subunits that assemble into four stacked heptameric rings, resulting in a barrel-shaped structure. The two inner rings, each composed of seven catalytic beta subunits, are sandwiched by two outer rings, each composed of seven alpha subunits. The catalytic chamber with the active sites is on the inside of the barrel. Has a gated structure, the ends of the cylinder being occluded by the N-termini of the alpha-subunits. Is capped at one or both ends by the proteasome regulatory ATPase, PAN.

The protein localises to the cytoplasm. The formation of the proteasomal ATPase PAN-20S proteasome complex, via the docking of the C-termini of PAN into the intersubunit pockets in the alpha-rings, triggers opening of the gate for substrate entry. Interconversion between the open-gate and close-gate conformations leads to a dynamic regulation of the 20S proteasome proteolysis activity. Its function is as follows. Component of the proteasome core, a large protease complex with broad specificity involved in protein degradation. The protein is Proteasome subunit alpha of Methanococcus vannielii (strain ATCC 35089 / DSM 1224 / JCM 13029 / OCM 148 / SB).